Reading from the N-terminus, the 231-residue chain is Probable septum site-determining protein MinC (231 aa).

Belongs to the MinC family. As to quaternary structure, interacts with MinD and FtsZ.

Cell division inhibitor that blocks the formation of polar Z ring septums. Rapidly oscillates between the poles of the cell to destabilize FtsZ filaments that have formed before they mature into polar Z rings. Prevents FtsZ polymerization. The protein is Probable septum site-determining protein MinC of Baumannia cicadellinicola subsp. Homalodisca coagulata.